The primary structure comprises 129 residues: MAALSNEQIIEAIRGKTILELSELIKAVEEEFGVTAAVPVAPVAEGGGAGSVAAEEQTEFTVVLKGLAEPGKKIAVIKEVRNVISGLGLKEAKDLVEGAPKTLKENVSKEEAAKIKESMTAAGALIEIS.

It belongs to the bacterial ribosomal protein bL12 family. As to quaternary structure, homodimer. Part of the ribosomal stalk of the 50S ribosomal subunit. Forms a multimeric L10(L12)X complex, where L10 forms an elongated spine to which 2 to 4 L12 dimers bind in a sequential fashion. Binds GTP-bound translation factors.

Forms part of the ribosomal stalk which helps the ribosome interact with GTP-bound translation factors. Is thus essential for accurate translation. The sequence is that of Large ribosomal subunit protein bL12 from Treponema pallidum (strain Nichols).